The primary structure comprises 795 residues: Delta-1-pyrroline-5-carboxylate synthase (795 aa).

The segment at 1–361 (MLRHMHRSGV…FFSEVKPAGP (361 aa)) is glutamate 5-kinase. Substrate is bound by residues S117, D223, and N246. Residues 266–267 (SD) and 305–311 (LGGMEAK) contribute to the ATP site. K311, K347, and K550 each carry N6-succinyllysine. Residues 362–795 (TVEQQGEMAR…NLPVPQRNFS (434 aa)) form a gamma-glutamyl phosphate reductase region.

It in the N-terminal section; belongs to the glutamate 5-kinase family. In the C-terminal section; belongs to the gamma-glutamyl phosphate reductase family. Can form homodimers/multimers.

Its subcellular location is the mitochondrion matrix. It carries out the reaction L-glutamate + ATP = L-glutamyl 5-phosphate + ADP. The catalysed reaction is L-glutamate 5-semialdehyde + phosphate + NADP(+) = L-glutamyl 5-phosphate + NADPH + H(+). The protein operates within amino-acid biosynthesis; L-proline biosynthesis; L-glutamate 5-semialdehyde from L-glutamate: step 1/2. It functions in the pathway amino-acid biosynthesis; L-proline biosynthesis; L-glutamate 5-semialdehyde from L-glutamate: step 2/2. Isoform Short: Inhibited by L-ornithine with a Ki of approximately 0.25 mm. Isoform Long: Insensitive to ornithine inhibition. Thus, the two amino acid insert in the long isoform abolishes feedback inhibition of P5CS activity by L-ornithine. Bifunctional enzyme that converts glutamate to glutamate 5-semialdehyde, an intermediate in the biosynthesis of proline, ornithine and arginine. This chain is Delta-1-pyrroline-5-carboxylate synthase (Aldh18a1), found in Mus musculus (Mouse).